Reading from the N-terminus, the 397-residue chain is Anhydro-N-acetylmuramic acid kinase (397 aa).

9–16 (GTSYDAID) is an ATP binding site.

The protein belongs to the anhydro-N-acetylmuramic acid kinase family.

It catalyses the reaction 1,6-anhydro-N-acetyl-beta-muramate + ATP + H2O = N-acetyl-D-muramate 6-phosphate + ADP + H(+). Its pathway is amino-sugar metabolism; 1,6-anhydro-N-acetylmuramate degradation. It functions in the pathway cell wall biogenesis; peptidoglycan recycling. In terms of biological role, catalyzes the specific phosphorylation of 1,6-anhydro-N-acetylmuramic acid (anhMurNAc) with the simultaneous cleavage of the 1,6-anhydro ring, generating MurNAc-6-P. Is required for the utilization of anhMurNAc either imported from the medium or derived from its own cell wall murein, and thus plays a role in cell wall recycling. The protein is Anhydro-N-acetylmuramic acid kinase of Rhodococcus erythropolis (strain PR4 / NBRC 100887).